The primary structure comprises 200 residues: Interferon lambda-1 (200 aa).

The N-terminal stretch at 1–19 (MAAAWTVVLVTLVLGLAVA) is a signal peptide. An N-linked (GlcNAc...) asparagine glycan is attached at asparagine 65. The cysteines at positions 68 and 164 are disulfide-linked.

Belongs to the lambda interferon family.

The protein resides in the secreted. In terms of biological role, cytokine with antiviral, antitumour and immunomodulatory activities. Plays a critical role in the antiviral host defense, predominantly in the epithelial tissues. Acts as a ligand for the heterodimeric class II cytokine receptor composed of IL10RB and IFNLR1, and receptor engagement leads to the activation of the JAK/STAT signaling pathway resulting in the expression of IFN-stimulated genes (ISG), which mediate the antiviral state. Has a restricted receptor distribution and therefore restricted targets: is primarily active in epithelial cells and this cell type-selective action is because of the epithelial cell-specific expression of its receptor IFNLR1. Exerts an immunomodulatory effect by up-regulating MHC class I antigen expression. The chain is Interferon lambda-1 (IFNL1) from Homo sapiens (Human).